Consider the following 1076-residue polypeptide: DNA-directed RNA polymerase subunit beta (1076 aa).

This sequence belongs to the RNA polymerase beta chain family. In plastids the minimal PEP RNA polymerase catalytic core is composed of four subunits: alpha, beta, beta', and beta''. When a (nuclear-encoded) sigma factor is associated with the core the holoenzyme is formed, which can initiate transcription.

The protein resides in the plastid. It localises to the chloroplast. It carries out the reaction RNA(n) + a ribonucleoside 5'-triphosphate = RNA(n+1) + diphosphate. DNA-dependent RNA polymerase catalyzes the transcription of DNA into RNA using the four ribonucleoside triphosphates as substrates. This chain is DNA-directed RNA polymerase subunit beta, found in Hordeum vulgare (Barley).